Reading from the N-terminus, the 284-residue chain is Polyamine aminopropyltransferase (284 aa).

The 236-residue stretch at 2–237 (ELWYTEKHTE…GHWLFGFASK (236 aa)) folds into the PABS domain. Residue Q31 participates in S-methyl-5'-thioadenosine binding. Positions 62 and 86 each coordinate spermidine. S-methyl-5'-thioadenosine contacts are provided by residues E106 and 137–138 (DG). D155 serves as the catalytic Proton acceptor. A spermidine-binding site is contributed by 155–158 (DSTD). Position 162 (P162) interacts with S-methyl-5'-thioadenosine.

It belongs to the spermidine/spermine synthase family. Homodimer or homotetramer.

The protein localises to the cytoplasm. It carries out the reaction S-adenosyl 3-(methylsulfanyl)propylamine + putrescine = S-methyl-5'-thioadenosine + spermidine + H(+). The protein operates within amine and polyamine biosynthesis; spermidine biosynthesis; spermidine from putrescine: step 1/1. Functionally, catalyzes the irreversible transfer of a propylamine group from the amino donor S-adenosylmethioninamine (decarboxy-AdoMet) to putrescine (1,4-diaminobutane) to yield spermidine. This chain is Polyamine aminopropyltransferase, found in Clostridium botulinum (strain Eklund 17B / Type B).